The chain runs to 86 residues: Alpha-mammal toxin Ts3 (86 aa).

Positions 1–19 are cleaved as a signal peptide; the sequence is MNYFILLVVVCLLTAGTEG. One can recognise an LCN-type CS-alpha/beta domain in the interval 21-82; that stretch reads KDGYPVEYDN…EPTKTNGKCK (62 aa). Cystine bridges form between cysteine 31/cysteine 81, cysteine 35/cysteine 57, cysteine 43/cysteine 64, and cysteine 47/cysteine 66. Serine 83 carries the post-translational modification Serine amide.

As to expression, expressed by the venom gland.

It is found in the secreted. Alpha toxins bind voltage-independently at site-3 of sodium channels (Nav) and inhibit the inactivation of the activated channels, thereby blocking neuronal transmission. This synthetic toxin inhibits inactivation of rat Nav1.4/SCN4A (when tested at 201 nM). In addition, it has been shown to cause a persistent sodium channel activation in nitrergic inhibitory fibers innervating the rabbit corpus cavernosum, resulting in NO release and cavernosal smooth muscle relaxation. This toxin is active against mammals. Its function is as follows. this synthetic peptide with a Ser at position 31 (C12S) acts as a bradykinin-potentiating peptide (BPP). Induces endothelium-dependent vasodilation that is reverted by NO synthase inhibitor, suggesting it activates molecular targets on vascular endothelium leading to NO production and vasodilation. It appears to induce vasodilation through muscarinic acetylcholine receptors (AChR) M2 (CHRM2) and M3 (CHRM3). Does not inhibit the angiotensin-converting enzyme (ACE). Does not act via bradykinin B2 receptor. The protein is Alpha-mammal toxin Ts3 of Tityus serrulatus (Brazilian scorpion).